The sequence spans 864 residues: DNA mismatch repair protein MutS (864 aa).

ATP is bound at residue glycine 607–serine 614.

Belongs to the DNA mismatch repair MutS family.

Its function is as follows. This protein is involved in the repair of mismatches in DNA. It is possible that it carries out the mismatch recognition step. This protein has a weak ATPase activity. This is DNA mismatch repair protein MutS from Neisseria meningitidis serogroup C / serotype 2a (strain ATCC 700532 / DSM 15464 / FAM18).